The sequence spans 233 residues: Large ribosomal subunit protein uL1 (233 aa).

It belongs to the universal ribosomal protein uL1 family. Part of the 50S ribosomal subunit.

Its function is as follows. Binds directly to 23S rRNA. The L1 stalk is quite mobile in the ribosome, and is involved in E site tRNA release. Protein L1 is also a translational repressor protein, it controls the translation of the L11 operon by binding to its mRNA. The polypeptide is Large ribosomal subunit protein uL1 (Shewanella woodyi (strain ATCC 51908 / MS32)).